The sequence spans 334 residues: D-fructose 1,6-bisphosphatase class 2/sedoheptulose 1,7-bisphosphatase (334 aa).

Residues D33, E57, D85, and E88 each contribute to the Mn(2+) site. Substrate is bound by residues 88–90 (EGT), Y119, 164–166 (RAR), and 186–188 (DGD). E213 contacts Mn(2+).

This sequence belongs to the FBPase class 2 family. In terms of assembly, homotetramer. Mn(2+) is required as a cofactor.

It carries out the reaction beta-D-fructose 1,6-bisphosphate + H2O = beta-D-fructose 6-phosphate + phosphate. The enzyme catalyses D-sedoheptulose 1,7-bisphosphate + H2O = D-sedoheptulose 7-phosphate + phosphate. It participates in carbohydrate biosynthesis; Calvin cycle. Functionally, catalyzes the hydrolysis of fructose 1,6-bisphosphate (Fru 1,6-P2) and sedoheptulose 1,7-bisphosphate (Sed 1,7-P2) to fructose 6-phosphate and sedoheptulose 7-phosphate, respectively. This Prochlorococcus marinus (strain MIT 9313) protein is D-fructose 1,6-bisphosphatase class 2/sedoheptulose 1,7-bisphosphatase.